Here is a 509-residue protein sequence, read N- to C-terminus: Steroid 17-alpha-hydroxylase/17,20 lyase (509 aa).

N202 lines the substrate pocket. Heme is bound at residue C442.

This sequence belongs to the cytochrome P450 family. The cofactor is heme.

Its subcellular location is the endoplasmic reticulum membrane. The protein resides in the microsome membrane. The enzyme catalyses a C21-steroid + reduced [NADPH--hemoprotein reductase] + O2 = a 17alpha-hydroxy-C21-steroid + oxidized [NADPH--hemoprotein reductase] + H2O + H(+). It catalyses the reaction progesterone + reduced [NADPH--hemoprotein reductase] + O2 = 17alpha-hydroxyprogesterone + oxidized [NADPH--hemoprotein reductase] + H2O + H(+). It carries out the reaction pregnenolone + reduced [NADPH--hemoprotein reductase] + O2 = 17alpha-hydroxypregnenolone + oxidized [NADPH--hemoprotein reductase] + H2O + H(+). The catalysed reaction is 17alpha-hydroxyprogesterone + reduced [NADPH--hemoprotein reductase] + O2 = androst-4-ene-3,17-dione + acetate + oxidized [NADPH--hemoprotein reductase] + H2O + 2 H(+). The enzyme catalyses 17alpha-hydroxyprogesterone + reduced [NADPH--hemoprotein reductase] + O2 = 16alpha,17alpha-dihydroxyprogesterone + oxidized [NADPH--hemoprotein reductase] + H2O + H(+). It catalyses the reaction 16alpha,17alpha-dihydroxyprogesterone + reduced [NADPH--hemoprotein reductase] + O2 = 6beta,16alpha,17alpha-trihydroxyprogesterone + oxidized [NADPH--hemoprotein reductase] + H2O + H(+). It carries out the reaction 17alpha-hydroxypregnenolone + reduced [NADPH--hemoprotein reductase] + O2 = 3beta-hydroxyandrost-5-en-17-one + acetate + oxidized [NADPH--hemoprotein reductase] + H2O + 2 H(+). The catalysed reaction is 16alpha,17alpha-dihydroxypregnenolone + reduced [NADPH--hemoprotein reductase] + O2 = 3beta,16alpha-dihydroxy-androst-5-en-17-one + acetate + oxidized [NADPH--hemoprotein reductase] + H2O + 2 H(+). The enzyme catalyses 3beta-hydroxyandrost-5-en-17-one + reduced [NADPH--hemoprotein reductase] + O2 = 3beta,16alpha-dihydroxy-androst-5-en-17-one + oxidized [NADPH--hemoprotein reductase] + H2O + H(+). It catalyses the reaction androst-4-ene-3,17-dione + reduced [NADPH--hemoprotein reductase] + O2 = 16alpha-hydroxyandrost-4-ene-3,17-dione + oxidized [NADPH--hemoprotein reductase] + H2O + H(+). The protein operates within steroid hormone biosynthesis. Its pathway is steroid biosynthesis; glucocorticoid biosynthesis. Regulated predominantly by intracellular cAMP levels. The 17,20-lyase activity is stimulated by cytochrome b5, which acts as an allosteric effector increasing the Vmax of the lyase activity. In terms of biological role, a cytochrome P450 monooxygenase involved in corticoid and androgen biosynthesis. Catalyzes 17-alpha hydroxylation of C21 steroids, which is common for both pathways. A second oxidative step, required only for androgen synthesis, involves an acyl-carbon cleavage. The 17-alpha hydroxy intermediates, as part of adrenal glucocorticoids biosynthesis pathway, are precursors of cortisol. Hydroxylates steroid hormones, pregnenolone and progesterone to form 17-alpha hydroxy metabolites, followed by the cleavage of the C17-C20 bond to form C19 steroids, dehydroepiandrosterone (DHEA) and androstenedione. Has 16-alpha hydroxylase activity. Catalyzes 16-alpha hydroxylation of 17-alpha hydroxy pregnenolone, followed by the cleavage of the C17-C20 bond to form 16-alpha-hydroxy DHEA. Also 16-alpha hydroxylates androgens, relevant for estriol synthesis. Mechanistically, uses molecular oxygen inserting one oxygen atom into a substrate, and reducing the second into a water molecule, with two electrons provided by NADPH via cytochrome P450 reductase (CPR; NADPH-ferrihemoprotein reductase). This chain is Steroid 17-alpha-hydroxylase/17,20 lyase (CYP17A1), found in Bison bison (American bison).